A 292-amino-acid polypeptide reads, in one-letter code: MAAAAAAVAGAGRGGGGGADPGQERSRARSWVGAERSEGRRMEPNEELEEEDSPGGREDGFTAEHLAAEAMAADMDPWLVFDARTTPATELDAWLAKYPPSQVTRYGDPGSPNSEPVGWIAAYGQGYTPNSGDVQGLQAAWEALQTSGRPITPGTLRQLAITHHVLSGKWLIHLAPGFKLDHAWAGIARAVVEGRLQVAKVSPRAKEGGRQVICVYTDDFTDRLGVLEADSAIRAAGIKCLLTYKPDVYTYLGIYRANRWHLCPTLYESRFQLGGNARGSRVLDRANNVELT.

Residues 1 to 10 (MAAAAAAVAG) are compositionally biased toward low complexity. The tract at residues 1–60 (MAAAAAAVAGAGRGGGGGADPGQERSRARSWVGAERSEGRRMEPNEELEEEDSPGGREDG) is disordered. The segment covering 11–20 (AGRGGGGGAD) has biased composition (gly residues). The segment covering 35-44 (ERSEGRRMEP) has biased composition (basic and acidic residues).

This sequence belongs to the UPF0696 family.

This chain is UPF0696 protein C11orf68 homolog (Bles03), found in Rattus norvegicus (Rat).